The sequence spans 386 residues: Patatin-16 (386 aa).

A signal peptide spans 1-23; it reads MATTKSFLILIVMILATTSSTFA. The PNPLA domain occupies 32–229; that stretch reads LSIDGGGIKG…TVADPALLSV (198 aa). Positions 36-41 match the GXGXXG motif; sequence GGGIKG. The GXSXG motif lies at 75 to 79; it reads GTSTG. The active-site Nucleophile is Ser-77. N-linked (GlcNAc...) asparagine glycosylation is present at Asn-115. Residue Asp-215 is the Proton acceptor of the active site. The DGA/G signature appears at 215 to 217; it reads DGA. A coiled-coil region spans residues 360–384; that stretch reads ETYEEALKRFAKLLSDRKKLRANKA.

It belongs to the patatin family.

Its subcellular location is the vacuole. In terms of biological role, probable lipolytic acyl hydrolase (LAH), an activity which is thought to be involved in the response of tubers to pathogens. The chain is Patatin-16 from Solanum tuberosum (Potato).